An 88-amino-acid chain; its full sequence is Eclosion hormone (88 aa).

A signal peptide spans 1-26 (MANKLTAVIVVALAVAFMVNLDYANC). 3 disulfide bridges follow: Cys-40–Cys-64, Cys-44–Cys-60, and Cys-47–Cys-75.

It belongs to the insect eclosion hormone family.

The protein localises to the secreted. In terms of biological role, neuropeptide that triggers the performance of ecdysis behaviors at the end of a molt. It triggers adult behavior patterns: larval, pupal and adult ecdysis, and plasticization during the molt. The protein is Eclosion hormone of Bombyx mori (Silk moth).